The chain runs to 516 residues: 2-isopropylmalate synthase (516 aa).

The 263-residue stretch at 8–270 (IYIFDTTLRD…YTGIKTESIY (263 aa)) folds into the Pyruvate carboxyltransferase domain. Residues D17, H205, H207, and N241 each contribute to the Mn(2+) site. A regulatory domain region spans residues 394 to 516 (KLIYLNVVSG…DAGKIKSEYE (123 aa)).

This sequence belongs to the alpha-IPM synthase/homocitrate synthase family. LeuA type 1 subfamily. As to quaternary structure, homodimer. It depends on Mn(2+) as a cofactor.

It is found in the cytoplasm. It catalyses the reaction 3-methyl-2-oxobutanoate + acetyl-CoA + H2O = (2S)-2-isopropylmalate + CoA + H(+). Its pathway is amino-acid biosynthesis; L-leucine biosynthesis; L-leucine from 3-methyl-2-oxobutanoate: step 1/4. In terms of biological role, catalyzes the condensation of the acetyl group of acetyl-CoA with 3-methyl-2-oxobutanoate (2-ketoisovalerate) to form 3-carboxy-3-hydroxy-4-methylpentanoate (2-isopropylmalate). This chain is 2-isopropylmalate synthase, found in Syntrophus aciditrophicus (strain SB).